The sequence spans 404 residues: Cysteine desulfurase IscS (404 aa).

Pyridoxal 5'-phosphate contacts are provided by residues 75-76, Asn155, Gln183, and 203-205; these read AT and SAH. The residue at position 206 (Lys206) is an N6-(pyridoxal phosphate)lysine. A pyridoxal 5'-phosphate-binding site is contributed by Thr243. The Cysteine persulfide intermediate role is filled by Cys328. Position 328 (Cys328) interacts with [2Fe-2S] cluster.

Belongs to the class-V pyridoxal-phosphate-dependent aminotransferase family. NifS/IscS subfamily. In terms of assembly, homodimer. Forms a heterotetramer with IscU, interacts with other sulfur acceptors. Pyridoxal 5'-phosphate serves as cofactor.

The protein localises to the cytoplasm. The enzyme catalyses (sulfur carrier)-H + L-cysteine = (sulfur carrier)-SH + L-alanine. Its pathway is cofactor biosynthesis; iron-sulfur cluster biosynthesis. Functionally, master enzyme that delivers sulfur to a number of partners involved in Fe-S cluster assembly, tRNA modification or cofactor biosynthesis. Catalyzes the removal of elemental sulfur atoms from cysteine to produce alanine. Functions as a sulfur delivery protein for Fe-S cluster synthesis onto IscU, an Fe-S scaffold assembly protein, as well as other S acceptor proteins. The polypeptide is Cysteine desulfurase IscS (Stutzerimonas stutzeri (strain A1501) (Pseudomonas stutzeri)).